The following is a 548-amino-acid chain: Probable 2,3-bisphosphoglycerate-independent phosphoglycerate mutase (548 aa).

Aspartate 20 and serine 73 together coordinate Mn(2+). Serine 73 serves as the catalytic Phosphoserine intermediate. Substrate-binding positions include histidine 134, 164–165 (RD), arginine 200, arginine 207, 279–282 (RGDR), and lysine 354. Residues aspartate 422, histidine 426, aspartate 463, histidine 464, and histidine 493 each contribute to the Mn(2+) site.

This sequence belongs to the BPG-independent phosphoglycerate mutase family. Monomer. It depends on Mn(2+) as a cofactor.

The catalysed reaction is (2R)-2-phosphoglycerate = (2R)-3-phosphoglycerate. The protein operates within carbohydrate degradation; glycolysis; pyruvate from D-glyceraldehyde 3-phosphate: step 3/5. Catalyzes the interconversion of 2-phosphoglycerate and 3-phosphoglycerate. In Leptospira interrogans serogroup Icterohaemorrhagiae serovar Lai (strain 56601), this protein is Probable 2,3-bisphosphoglycerate-independent phosphoglycerate mutase (gpmI).